A 345-amino-acid chain; its full sequence is Holliday junction branch migration complex subunit RuvB (345 aa).

Residues 1 to 186 form a large ATPase domain (RuvB-L) region; it reads MSTDPDEREV…FGFTAHMDFY (186 aa). ATP contacts are provided by residues Leu-25, Arg-26, Gly-67, Lys-70, Thr-71, Ser-72, 133–135, Arg-176, Tyr-186, and Arg-223; that span reads EDF. Position 71 (Thr-71) interacts with Mg(2+). Residues 187-257 are small ATPAse domain (RuvB-S); sequence EPAELERVLV…VAKAALAVYD (71 aa). Positions 260–345 are head domain (RuvB-H); it reads ELGLDRLDRA…AGANQPGLFE (86 aa). Positions 315 and 320 each coordinate DNA.

It belongs to the RuvB family. In terms of assembly, homohexamer. Forms an RuvA(8)-RuvB(12)-Holliday junction (HJ) complex. HJ DNA is sandwiched between 2 RuvA tetramers; dsDNA enters through RuvA and exits via RuvB. An RuvB hexamer assembles on each DNA strand where it exits the tetramer. Each RuvB hexamer is contacted by two RuvA subunits (via domain III) on 2 adjacent RuvB subunits; this complex drives branch migration. In the full resolvosome a probable DNA-RuvA(4)-RuvB(12)-RuvC(2) complex forms which resolves the HJ.

It localises to the cytoplasm. The enzyme catalyses ATP + H2O = ADP + phosphate + H(+). Its function is as follows. The RuvA-RuvB-RuvC complex processes Holliday junction (HJ) DNA during genetic recombination and DNA repair, while the RuvA-RuvB complex plays an important role in the rescue of blocked DNA replication forks via replication fork reversal (RFR). RuvA specifically binds to HJ cruciform DNA, conferring on it an open structure. The RuvB hexamer acts as an ATP-dependent pump, pulling dsDNA into and through the RuvAB complex. RuvB forms 2 homohexamers on either side of HJ DNA bound by 1 or 2 RuvA tetramers; 4 subunits per hexamer contact DNA at a time. Coordinated motions by a converter formed by DNA-disengaged RuvB subunits stimulates ATP hydrolysis and nucleotide exchange. Immobilization of the converter enables RuvB to convert the ATP-contained energy into a lever motion, pulling 2 nucleotides of DNA out of the RuvA tetramer per ATP hydrolyzed, thus driving DNA branch migration. The RuvB motors rotate together with the DNA substrate, which together with the progressing nucleotide cycle form the mechanistic basis for DNA recombination by continuous HJ branch migration. Branch migration allows RuvC to scan DNA until it finds its consensus sequence, where it cleaves and resolves cruciform DNA. The chain is Holliday junction branch migration complex subunit RuvB from Mycobacterium marinum (strain ATCC BAA-535 / M).